We begin with the raw amino-acid sequence, 452 residues long: 1-aminocyclopropane-1-carboxylate synthase 3 (452 aa).

Lys283 carries the post-translational modification N6-(pyridoxal phosphate)lysine.

This sequence belongs to the class-I pyridoxal-phosphate-dependent aminotransferase family. Pyridoxal 5'-phosphate serves as cofactor. Expressed in leaves. Expressed in roots and leaf blades. Expressed at low levels in leaf sheaths and shoot bases.

It carries out the reaction S-adenosyl-L-methionine = 1-aminocyclopropane-1-carboxylate + S-methyl-5'-thioadenosine + H(+). The protein operates within alkene biosynthesis; ethylene biosynthesis via S-adenosyl-L-methionine; ethylene from S-adenosyl-L-methionine: step 1/2. Catalyzes the formation of 1-aminocyclopropane-1-carboxylate, a direct precursor of ethylene in higher plants. The chain is 1-aminocyclopropane-1-carboxylate synthase 3 from Oryza sativa subsp. japonica (Rice).